Here is a 548-residue protein sequence, read N- to C-terminus: Undecaprenyl phosphate-alpha-4-amino-4-deoxy-L-arabinose arabinosyl transferase 1 (548 aa).

12 consecutive transmembrane segments (helical) span residues 11–31 (WLLF…TRLL), 89–109 (IVVV…AMVV), 114–134 (ALAF…AIGT), 137–157 (ILDP…LVAL), 180–200 (FLTK…VMAI), 214–234 (IALL…ALQA), 263–283 (FYIP…FGAL), 292–312 (GTLY…ASKG), 314–334 (LLTY…HYIE), 347–367 (VNAS…IYSL), 382–402 (KIVL…GALF), and 405–425 (TQFL…YAIP).

The protein belongs to the glycosyltransferase 83 family.

It localises to the cell inner membrane. It catalyses the reaction 4-amino-4-deoxy-alpha-L-arabinopyranosyl di-trans,octa-cis-undecaprenyl phosphate + lipid IVA = lipid IIA + di-trans,octa-cis-undecaprenyl phosphate.. Its pathway is lipopolysaccharide metabolism; 4-amino-4-deoxy-beta-L-arabinose-lipid A biosynthesis. Catalyzes the transfer of the L-Ara4N moiety of the glycolipid undecaprenyl phosphate-alpha-L-Ara4N to lipid A. The modified arabinose is attached to lipid A and is required for resistance to polymyxin and cationic antimicrobial peptides. The protein is Undecaprenyl phosphate-alpha-4-amino-4-deoxy-L-arabinose arabinosyl transferase 1 of Proteus mirabilis (strain HI4320).